The primary structure comprises 79 residues: Acyl carrier protein (79 aa).

One can recognise a Carrier domain in the interval 2 to 77 (SDIEQRVKKI…QAIDYAKAHV (76 aa)). Residue Ser-37 is modified to O-(pantetheine 4'-phosphoryl)serine.

The protein belongs to the acyl carrier protein (ACP) family. In terms of processing, 4'-phosphopantetheine is transferred from CoA to a specific serine of apo-ACP by AcpS. This modification is essential for activity because fatty acids are bound in thioester linkage to the sulfhydryl of the prosthetic group.

Its subcellular location is the cytoplasm. It participates in lipid metabolism; fatty acid biosynthesis. Its function is as follows. Carrier of the growing fatty acid chain in fatty acid biosynthesis. The chain is Acyl carrier protein from Janthinobacterium sp. (strain Marseille) (Minibacterium massiliensis).